Consider the following 66-residue polypeptide: Stress-induced protein KIN2 (66 aa).

Over residues 1–10 (MSETNKNAFQ) the composition is skewed to polar residues. The tract at residues 1 to 20 (MSETNKNAFQAGQAAGKAEE) is disordered. 2 consecutive repeats follow at residues 31–35 (DAAAA) and 49–53 (DAAVG).

As to quaternary structure, interacts with DEK3. In terms of tissue distribution, expressed at high levels in embryos and mature seeds.

This chain is Stress-induced protein KIN2, found in Arabidopsis thaliana (Mouse-ear cress).